The chain runs to 266 residues: Glucosamine-6-phosphate deaminase (266 aa).

The Proton acceptor; for enolization step role is filled by D72. The active-site For ring-opening step is D141. The Proton acceptor; for ring-opening step role is filled by H143. E148 serves as the catalytic For ring-opening step.

This sequence belongs to the glucosamine/galactosamine-6-phosphate isomerase family. NagB subfamily. As to quaternary structure, homohexamer.

It catalyses the reaction alpha-D-glucosamine 6-phosphate + H2O = beta-D-fructose 6-phosphate + NH4(+). The protein operates within amino-sugar metabolism; N-acetylneuraminate degradation; D-fructose 6-phosphate from N-acetylneuraminate: step 5/5. Its activity is regulated as follows. Allosterically activated by N-acetylglucosamine 6-phosphate (GlcNAc6P). Functionally, catalyzes the reversible isomerization-deamination of glucosamine 6-phosphate (GlcN6P) to form fructose 6-phosphate (Fru6P) and ammonium ion. This is Glucosamine-6-phosphate deaminase from Pectobacterium atrosepticum (strain SCRI 1043 / ATCC BAA-672) (Erwinia carotovora subsp. atroseptica).